We begin with the raw amino-acid sequence, 494 residues long: Prenylcysteine oxidase 1-like (494 aa).

Positions 1–22 (MARAAPLLAALTALLAAAAAGG) are cleaved as a signal peptide. Asn342 is a glycosylation site (N-linked (GlcNAc...) asparagine).

This sequence belongs to the prenylcysteine oxidase family. FAD is required as a cofactor.

The protein resides in the secreted. Functionally, likely to have oxidoreductase activity. Required in the mevalonate pathway to regulate prenylation and enhances the bactericidal activity of neutrophils. This chain is Prenylcysteine oxidase 1-like (PCYOX1L), found in Homo sapiens (Human).